The primary structure comprises 405 residues: Serine-type anaerobic sulfatase-maturating enzyme (405 aa).

Positions 18 to 249 (PRSPVPFHIL…QWRKRCDRGR (232 aa)) constitute a Radical SAM core domain. 2 residues coordinate [4Fe-4S] cluster: Cys-35 and Cys-39. Residue Tyr-41 participates in S-adenosyl-L-methionine binding. Position 42 (Cys-42) interacts with [4Fe-4S] cluster. The S-adenosyl-L-methionine site is built by Gly-84, Ser-140, and Arg-152. Residues Cys-270, Cys-276, and Cys-291 each coordinate [4Fe-4S] cluster. Asp-292 functions as the Proton acceptor in the catalytic mechanism. Residues Cys-331, Cys-334, Cys-340, Cys-344, and Cys-357 each coordinate [4Fe-4S] cluster.

The protein belongs to the radical SAM superfamily. Anaerobic sulfatase-maturating enzyme family. In terms of assembly, monomer. Interacts with AtsA prior to its export to the periplasm. It depends on [4Fe-4S] cluster as a cofactor.

Its subcellular location is the cytoplasm. The enzyme catalyses L-seryl-[sulfatase] + S-adenosyl-L-methionine = 3-oxo-L-alanyl-[sulfatase] + 5'-deoxyadenosine + L-methionine + H(+). Its pathway is protein modification; sulfatase oxidation. Functionally, involved in 'Ser-type' sulfatase maturation under anaerobic conditions. Catalyzes the post-translational modification of serine ('Ser-72' in the arylsulfatase AtsA) into 3-oxoalanine (also known as C(alpha)-formylglycine (FGly)), by a free radical chemical mechanism initiated via the reductive cleavage of S-adenosyl-L-methionine (SAM). This chain is Serine-type anaerobic sulfatase-maturating enzyme, found in Klebsiella aerogenes (Enterobacter aerogenes).